A 69-amino-acid polypeptide reads, in one-letter code: uncharacterized protein (69 aa).

This is an uncharacterized protein from Treponema pallidum (strain Nichols).